The chain runs to 414 residues: Putative dipeptidase ARB_02715 (414 aa).

An N-terminal signal peptide occupies residues 1 to 20 (MAALFVSLLALTSLVPVQGA). Residues His-45, Asp-47, and Glu-157 each coordinate Zn(2+). An intrachain disulfide couples Cys-96 to Cys-186. His-184 contributes to the substrate binding site. Zn(2+)-binding residues include His-228 and His-249. The substrate site is built by Arg-260 and Asp-320. N-linked (GlcNAc...) asparagine glycosylation occurs at Asn-392.

This sequence belongs to the metallo-dependent hydrolases superfamily. Peptidase M19 family. It depends on Zn(2+) as a cofactor.

The catalysed reaction is an L-aminoacyl-L-amino acid + H2O = 2 an L-alpha-amino acid. Hydrolyzes a wide range of dipeptides. In Arthroderma benhamiae (strain ATCC MYA-4681 / CBS 112371) (Trichophyton mentagrophytes), this protein is Putative dipeptidase ARB_02715.